Consider the following 481-residue polypeptide: Zinc metalloproteinase/disintegrin (481 aa).

An N-terminal signal peptide occupies residues 1–20; it reads MIQVLLVTICLAVFPYQGSS. A propeptide spanning residues 21–190 is cleaved from the precursor; it reads IILESGNVDD…KASQLYLTPE (170 aa). Residues 197–392 enclose the Peptidase M12B domain; it reads RYIKLAIVVD…DNPQCILNAP (196 aa). 3 disulfide bridges follow: Cys308–Cys387, Cys349–Cys371, and Cys351–Cys354. Residue His333 participates in Zn(2+) binding. The active site involves Glu334. Zn(2+) contacts are provided by His337 and His343. The propeptide occupies 393–408; sequence LRTDTVSTPVSGNEFL. A Disintegrin domain is found at 400–481; that stretch reads TPVSGNEFLE…ADCPRNGLYS (82 aa). Disulfide bonds link Cys414-Cys429, Cys416-Cys424, Cys423-Cys446, Cys437-Cys443, Cys442-Cys467, and Cys455-Cys474. The Cell attachment site signature appears at 459 to 461; it reads RGD.

It belongs to the venom metalloproteinase (M12B) family. P-II subfamily. P-IIa sub-subfamily. As to quaternary structure, monomer. It depends on Zn(2+) as a cofactor. Expressed by the venom gland.

The protein localises to the secreted. In terms of biological role, impairs hemostasis in the envenomed animal. Functionally, inhibits platelet aggregation induced by ADP, thrombin, platelet-activating factor and collagen. Acts by inhibiting fibrinogen interaction with platelet receptors GPIIb/GPIIIa (ITGA2B/ITGB3). The sequence is that of Zinc metalloproteinase/disintegrin from Protobothrops elegans (Elegant pitviper).